Reading from the N-terminus, the 504-residue chain is ATP synthase subunit alpha (504 aa).

Residue 171 to 178 (GDRATGKT) coordinates ATP.

The protein belongs to the ATPase alpha/beta chains family. In terms of assembly, F-type ATPases have 2 components, CF(1) - the catalytic core - and CF(0) - the membrane proton channel. CF(1) has five subunits: alpha(3), beta(3), gamma(1), delta(1), epsilon(1). CF(0) has three main subunits: a(1), b(2) and c(9-12). The alpha and beta chains form an alternating ring which encloses part of the gamma chain. CF(1) is attached to CF(0) by a central stalk formed by the gamma and epsilon chains, while a peripheral stalk is formed by the delta and b chains.

Its subcellular location is the cell inner membrane. The catalysed reaction is ATP + H2O + 4 H(+)(in) = ADP + phosphate + 5 H(+)(out). Its function is as follows. Produces ATP from ADP in the presence of a proton gradient across the membrane. The alpha chain is a regulatory subunit. This Sulfurihydrogenibium sp. (strain YO3AOP1) protein is ATP synthase subunit alpha.